A 386-amino-acid polypeptide reads, in one-letter code: NADH-ubiquinone oxidoreductase 49 kDa subunit homolog (386 aa).

It belongs to the complex I 49 kDa subunit family.

It localises to the mitochondrion. The catalysed reaction is a ubiquinone + NADH + 5 H(+)(in) = a ubiquinol + NAD(+) + 4 H(+)(out). Its function is as follows. Core subunit of the mitochondrial membrane respiratory chain NADH dehydrogenase (Complex I) that is believed to belong to the minimal assembly required for catalysis. Complex I functions in the transfer of electrons from NADH to the respiratory chain. The immediate electron acceptor for the enzyme is believed to be ubiquinone. Component of the iron-sulfur (IP) fragment of the enzyme. Component of the iron-sulfur (IP) fragment of the enzyme. This is NADH-ubiquinone oxidoreductase 49 kDa subunit homolog (NAD7) from Trypanosoma brucei brucei.